Reading from the N-terminus, the 407-residue chain is MAPRRRRGAGQDGSDDGRSDSDAPKNRPPNTAFRQQRMRAWQCVLTPKLIVTVFSILAAIYLGFGAWLTYLAHTVRDLKIDYTDCLTSAPKDDFETIPQNHITAHFSAKDSTFDPYKAQWKTTEREVQVANYTDNRQFCIVRFNIPEDLQPTISFFYYLENFYQNHRRYVNSFNAKQLLGDAVDGKTINDSTCDPITHDPKGTGKIVYPCGLVANSIFNDTFSSPLALAVRNSSDSSRPYNMTTKGIAWPGLKDLYGKTSYSLDQIVPPPNWERRYKYGYQENNPPPDLKTDELFQNWMMLAAAPNFYKLYQKNDTHPMLAGQYEIEIESNFDVTVYKGRKAFVITTLSTMGSRNIWPGIIFLIVGGICLVLDIYFILSFFIWRPRKLGDPSYLSWNQPSAPGGHSS.

Residues 1-33 are disordered; sequence MAPRRRRGAGQDGSDDGRSDSDAPKNRPPNTAF. At 1–48 the chain is on the cytoplasmic side; that stretch reads MAPRRRRGAGQDGSDDGRSDSDAPKNRPPNTAFRQQRMRAWQCVLTPK. A compositionally biased stretch (basic and acidic residues) spans 15–25; it reads DDGRSDSDAPK. Residues 49–69 traverse the membrane as a helical segment; sequence LIVTVFSILAAIYLGFGAWLT. The Extracellular portion of the chain corresponds to 70–359; that stretch reads YLAHTVRDLK…TMGSRNIWPG (290 aa). A disulfide bond links cysteine 85 and cysteine 139. N-linked (GlcNAc...) asparagine glycans are attached at residues asparagine 131 and asparagine 189. An intrachain disulfide couples cysteine 193 to cysteine 210. Asparagine 219, asparagine 232, asparagine 241, and asparagine 314 each carry an N-linked (GlcNAc...) asparagine glycan. A helical membrane pass occupies residues 360–380; that stretch reads IIFLIVGGICLVLDIYFILSF. The Cytoplasmic segment spans residues 381-407; it reads FIWRPRKLGDPSYLSWNQPSAPGGHSS.

This sequence belongs to the CDC50/LEM3 family. Component of a flippase complex consisting of DNF1 and CDC50. Interacts with DNF1; the interaction is direct.

The protein localises to the cell membrane. Its function is as follows. Accessory component of a P4-ATPase flippase complex which catalyzes the hydrolysis of ATP coupled to the transport of phosphatidylcholine and phosphatidylserine from the lumen to the cytosolic leaflet of membranes and ensures the maintenance of asymmetric distribution of phospholipids. The protein is Phospholipid-transporting ATPase accessory subunit CDC50 of Chaetomium thermophilum (strain DSM 1495 / CBS 144.50 / IMI 039719) (Thermochaetoides thermophila).